The following is a 152-amino-acid chain: Nucleoside diphosphate kinase (152 aa).

The ATP site is built by K11, F59, R87, T93, R104, and N114. Residue H117 is the Pros-phosphohistidine intermediate of the active site.

It belongs to the NDK family. As to quaternary structure, homotetramer. It depends on Mg(2+) as a cofactor.

The protein localises to the cytoplasm. The enzyme catalyses a 2'-deoxyribonucleoside 5'-diphosphate + ATP = a 2'-deoxyribonucleoside 5'-triphosphate + ADP. It catalyses the reaction a ribonucleoside 5'-diphosphate + ATP = a ribonucleoside 5'-triphosphate + ADP. Its function is as follows. Major role in the synthesis of nucleoside triphosphates other than ATP. The ATP gamma phosphate is transferred to the NDP beta phosphate via a ping-pong mechanism, using a phosphorylated active-site intermediate. The sequence is that of Nucleoside diphosphate kinase from Prochlorococcus marinus (strain MIT 9301).